Reading from the N-terminus, the 222-residue chain is Phosphoribosylformylglycinamidine synthase subunit PurQ (222 aa).

Positions 3 to 222 (AAVLVFPGSN…ASLAAALVAA (220 aa)) constitute a Glutamine amidotransferase type-1 domain. Cysteine 86 (nucleophile) is an active-site residue. Catalysis depends on residues histidine 194 and glutamate 196.

In terms of assembly, part of the FGAM synthase complex composed of 1 PurL, 1 PurQ and 2 PurS subunits.

The protein resides in the cytoplasm. The enzyme catalyses N(2)-formyl-N(1)-(5-phospho-beta-D-ribosyl)glycinamide + L-glutamine + ATP + H2O = 2-formamido-N(1)-(5-O-phospho-beta-D-ribosyl)acetamidine + L-glutamate + ADP + phosphate + H(+). It catalyses the reaction L-glutamine + H2O = L-glutamate + NH4(+). Its pathway is purine metabolism; IMP biosynthesis via de novo pathway; 5-amino-1-(5-phospho-D-ribosyl)imidazole from N(2)-formyl-N(1)-(5-phospho-D-ribosyl)glycinamide: step 1/2. Part of the phosphoribosylformylglycinamidine synthase complex involved in the purines biosynthetic pathway. Catalyzes the ATP-dependent conversion of formylglycinamide ribonucleotide (FGAR) and glutamine to yield formylglycinamidine ribonucleotide (FGAM) and glutamate. The FGAM synthase complex is composed of three subunits. PurQ produces an ammonia molecule by converting glutamine to glutamate. PurL transfers the ammonia molecule to FGAR to form FGAM in an ATP-dependent manner. PurS interacts with PurQ and PurL and is thought to assist in the transfer of the ammonia molecule from PurQ to PurL. This chain is Phosphoribosylformylglycinamidine synthase subunit PurQ, found in Jannaschia sp. (strain CCS1).